A 134-amino-acid polypeptide reads, in one-letter code: MDFRTGDNITAAQLKNGVFIWEVRNPLSFKIMQHRQIRPGSQMYVTQIRIMFNHGLKKALLMHKCFLDLTLYHYLTATSGMILSTFSDQLFRYLNNLGVISIGNVLKGASHILYEKLHHVEDVSLTHNVQYKLY.

This sequence belongs to the geminiviridae replication enhancer protein family. In terms of assembly, homooligomer. Interacts with the replication-associated protein (REP). Interacts with host proliferating cell nuclear antigen (PCNA). Interacts with host retinoblastoma-related protein 1 (RBR1), and may thereby deregulate the host cell cycle. Oligomerization and interaction with PCNA are necessary for optimal replication enhancement.

Functionally, increases viral DNA accumulation. Enhances infectivity and symptom expression. This chain is Replication enhancer protein, found in Mungbean yellow mosaic virus (strain Vigna) (MYMV).